The sequence spans 199 residues: MDKKQPHPLFKLATELGPLLVFFAANAKFNLFVATAAFMVAIVAAMIASYVVTRHIPLMALVTGIVVIVFGTLTLVLHDETFIKVKPTIIYSLFAGVLGGGLLFGRSFIAIMFDQVFNLTPRGWQVLTLRWALFFFGMAILNELIWRTQSTDFWVNFKVFGAVPLTMIFAMMQMPLTKRYHLEPATLEASDASEGDVRK.

Helical transmembrane passes span 7–27 (HPLF…AANA), 32–52 (FVAT…SYVV), 56–76 (IPLM…LTLV), 93–113 (LFAG…AIMF), 126–146 (VLTL…ELIW), and 153–173 (FWVN…AMMQ).

This sequence belongs to the YciB family.

Its subcellular location is the cell inner membrane. Functionally, plays a role in cell envelope biogenesis, maintenance of cell envelope integrity and membrane homeostasis. In Nitrobacter hamburgensis (strain DSM 10229 / NCIMB 13809 / X14), this protein is Inner membrane-spanning protein YciB.